Consider the following 506-residue polypeptide: Anaerobic nitric oxide reductase transcription regulator NorR (506 aa).

A 4-aspartylphosphate modification is found at D57. In terms of domain architecture, Sigma-54 factor interaction spans M187–V416. Residues G215–E222 and A278–E287 contribute to the ATP site. Residues W481–K500 constitute a DNA-binding region (H-T-H motif).

Its pathway is nitrogen metabolism; nitric oxide reduction. Its function is as follows. Required for the expression of anaerobic nitric oxide (NO) reductase, acts as a transcriptional activator for at least the norVW operon. Activation also requires sigma-54. The sequence is that of Anaerobic nitric oxide reductase transcription regulator NorR from Salmonella agona (strain SL483).